The sequence spans 360 residues: MKPSIVAKLEALHERHEEVQALLGDAGIIADQDRFRALSREYAQLSDVSRCFTDWQQVQDDIETAQMMLDDPEMREMAQEELREAKEKSEQLEQQLQVLLLPKDPDDERNAFLEVRAGTGGDEAALFAGDLFRMYSRYAEARRWRVEIMSMSEGEHGGYKEIIAKISGDGVYGRLKFESGGHRVQRVPATESQGRIHTSACTVAVMPELPEAELPDINPADLRIDTFRSSGAGGQHVNTTDSSIRITHLPTGIVVECQDERSQHKNKAKALSVLGARIHAAETAKRQQAEASTRRNLLGSGDRSDRNRTYNFPQGRVTDHRINLTLYRLDETMEGKLDMLIEPIVQEHQADLLAALSEQE.

Q235 carries the post-translational modification N5-methylglutamine. The tract at residues 285-313 (KRQQAEASTRRNLLGSGDRSDRNRTYNFP) is disordered.

This sequence belongs to the prokaryotic/mitochondrial release factor family. Methylated by PrmC. Methylation increases the termination efficiency of RF1.

The protein localises to the cytoplasm. In terms of biological role, peptide chain release factor 1 directs the termination of translation in response to the peptide chain termination codons UAG and UAA. The polypeptide is Peptide chain release factor 1 (Salmonella paratyphi A (strain ATCC 9150 / SARB42)).